Reading from the N-terminus, the 317-residue chain is Tenomodulin (317 aa).

The Cytoplasmic segment spans residues 1–30 (MAKNPPENCEDCHILNAEAFKSKKICKSLK). Residues 31-50 (ICGLVFGILALTLIVLFWGS) form a helical; Signal-anchor for type II membrane protein membrane-spanning segment. The Extracellular portion of the chain corresponds to 51–317 (KHFWPEVPKK…WWVARMLGRV (267 aa)). The BRICHOS domain maps to 93 to 186 (GNGTDETLEV…ICDNVTMYWI (94 aa)). N-linked (GlcNAc...) asparagine glycosylation occurs at N94. C120 and C178 form a disulfide bridge. N180 is a glycosylation site (N-linked (GlcNAc...) asparagine). A Phosphoserine modification is found at S239.

The protein belongs to the chondromodulin-1 family. Highly expressed in hypovascular connective tissues such as tendons. Also has strong expression in adipose tissue.

It is found in the membrane. The protein resides in the nucleus envelope. It localises to the cytoplasm. Its function is as follows. May be an angiogenesis inhibitor. In Homo sapiens (Human), this protein is Tenomodulin (TNMD).